The following is an 83-amino-acid chain: Molybdopterin synthase sulfur carrier subunit (83 aa).

Belongs to the MoaD family.

The protein operates within cofactor biosynthesis; molybdopterin biosynthesis. Its function is as follows. Involved in sulfur transfer in the conversion of molybdopterin precursor Z to molybdopterin. Probably plays a role in host phagosome maturation arrest. This is Molybdopterin synthase sulfur carrier subunit (moaD1) from Mycobacterium tuberculosis (strain ATCC 25618 / H37Rv).